The chain runs to 611 residues: POU domain, class 6, transcription factor 1 (611 aa).

The segment at 62 to 93 (ASQAAGEAGPDNLGSSAEATVKSPPGIPPSPA) is disordered. The 75-residue stretch at 449-523 (EDGINLEEIR…VLEKWLNEAE (75 aa)) folds into the POU-specific domain. The segment at residues 544 to 603 (KRKRRTSFTPQAIEALNAYFEKNPLPTGQEITEIAKELNYDREVVRVWFCNRRQTLKNTS) is a DNA-binding region (homeobox).

It belongs to the POU transcription factor family. Class-6 subfamily. In the embryo, expressed exclusively in the developing brain, whereas in the adult its expression is restricted to brain, heart, skeletal muscle and lung. In the brain, the highest expression levels are found in specific cell layers of the cortex, the olfactory bulb, the hippocampus and the cerebellum.

The protein localises to the nucleus. Transcription factor that binds preferentially to a variant of the octamer motif (5'-ATGATAAT-3'). This is POU domain, class 6, transcription factor 1 (POU6F1) from Homo sapiens (Human).